Consider the following 468-residue polypeptide: MRISQLEGKAVALWGWAREGRAAYRALRQQLPAQPLTVFCNAEEARDVAALADPALQVQTEASAQALAAFEVVIKSPGISPYREEARAAAAQGARFIGGTALWFAEHAQPDGYVPGAICVTGTKGKSTTTALLAHLLRADGHRTALVGNIGQPLLEVLSPQPPPAYWAIELSSYQTGEVGRSGARPELALVLNLFPEHLDWHGSEAAYVRDKLALVTDGRPRIALLNAADPHLAQLQLPESEVRWFNHPDGWHLRGDVVYRGQQPIFDTANVPLPGEHNRRNLCAVLAAVEALGLDAAALAPAALTFRPLPNRLQWLGSVDGIAYVNDSISTTPHASLAALACFAQQRVALLVGGHDRGLDWQEFAAHMAQQAPLEIVTMGANGPRIHALLAPLAQSAGFGLHAADDLAHAMQLARSALGAQGGVLLLSPGAPSFGVYSDYVARGRHFAQLAGFDPAAISAIPGLGVQ.

122–128 (GTKGKST) contacts ATP.

The protein belongs to the MurCDEF family. MurD2 subfamily.

It is found in the cytoplasm. The catalysed reaction is UDP-N-acetyl-alpha-D-muramoyl-L-alanine + L-glutamate + ATP = UDP-N-acetyl-alpha-D-muramoyl-L-alanyl-L-glutamate + ADP + phosphate + H(+). It functions in the pathway cell wall biogenesis; peptidoglycan biosynthesis. In terms of biological role, cell wall formation. Catalyzes the addition of L-glutamate to the nucleotide precursor UDP-N-acetylmuramoyl-L-alanine. The protein is UDP-N-acetylmuramoyl-L-alanine--L-glutamate ligase of Xanthomonas campestris pv. campestris (strain 8004).